Consider the following 395-residue polypeptide: SWI/SNF and RSC complexes subunit ssr4 (395 aa).

The segment at 182–230 is disordered; the sequence is KKHIPEGTALSQRETLPNMGSAQMKSQSRTPSFSNVTTSPVPPINSNAT. A compositionally biased stretch (polar residues) spans 190-230; that stretch reads ALSQRETLPNMGSAQMKSQSRTPSFSNVTTSPVPPINSNAT.

It belongs to the SSR4 family. As to quaternary structure, component of the RSC complex composed of at least arp9, arp42, rsc1, rsc4, rsc7, rsc9, rsc58, sfh1, snf21, ssr1, ssr2, ssr3 and ssr4. The complex interacts with histone and histone variant components of centromeric chromatin. Component of the SWI/SNF global transcription activator complex composed of at least arp9, arp42, snf5, snf22, snf30, sbf59, sol1, ssr1, ssr2, ssr3, ssr4 and tfg3.

It localises to the cytoplasm. The protein resides in the nucleus. Its function is as follows. Component of the chromatin structure remodeling complex (RSC), which is involved in transcription regulation and nucleosome positioning. Controls particularly membrane and organelle development genes. Part of the SWI/SNF complex, an ATP-dependent chromatin remodeling complex, required for the positive and negative regulation of gene expression of a large number of genes. It changes chromatin structure by altering DNA-histone contacts within a nucleosome, leading eventually to a change in nucleosome position, thus facilitating or repressing binding of gene-specific transcription factors. This chain is SWI/SNF and RSC complexes subunit ssr4 (ssr4), found in Schizosaccharomyces pombe (strain 972 / ATCC 24843) (Fission yeast).